The sequence spans 901 residues: MLIPSKLSRPVRLDHTVVRERLLAKLSGANNFRLALVTSPAGYGKTTLVSQWAAGKNELGWYSLDEGDNQQERFASYLIAAIQQATGGHCSTSEAMAQKRQYASLTSLFAQLFIELAQWHRPLYLVIDDYHLITNPVIHDAMRFFLRHQPENFTLVVLSRNLPQLGIANLRVRDQLLEIGSQQLAFNHQEAKQFFDRRLSSPIEASESSRMCDDVAGWATALQLIALSARQNHTSAHHSARRLAGINASHLSDYLVDEVLDNVDVSTRHFLLKSAILRSMNDALIVRVTGEENGQMRLEEIERQGLFLQRMDDTGEWFSYHPLFGSFLRQRCQWELAAELPEIHRAAAESWMEQGFPSEAIHHALAAGDAQMLRDILLNHAWGLFNHSELALLEESLKALPWESLLENPRLVLLQAWLMQSQHRYSEVNTLLARAEQEIKGVMDGTLHAEFNALRAQVAINDGNPEEAERLAKLALDELPLAWFYSRIVATSVHGEVLHCKGDLSQSLSLMQQTEQMARHHDVWHYALWSLIQQSEIQFAQGFLQAAWETQERAFQLIKEQHLEQLPMHEFLVRIRAQLLWAWARLDEAEASARSGIAVLSTFQPQQQLQCLTLLVQCSLARGDLDNARSQLNRLENLLGNGRYHCDWISNADKVRVIYWQLTGDKKSAANWLRHTPKPAFANNHFLQGQWRNIARAQILLGEFEPAEIVLEELNENARSLRLMSDLNRNLLLLNQLYWQSGRKNDAQRVLLDALQLANRTGFISHFVIEGEAMAQQLRQLIQLNTLPEMEQHRAQRILREINQHHRHKFAHFDEGFVERLLNHPDVPELIRTSPLTQREWQVLGLIYSGYSNEQIAGELAVAATTIKTHIRNLYQKLGVAHRQDAVQHAQQLLKMMGYGV.

Position 39–46 (39–46 (SPAGYGKT)) interacts with ATP. Residues 829-894 (ELIRTSPLTQ…DAVQHAQQLL (66 aa)) enclose the HTH luxR-type domain. The H-T-H motif DNA-binding region spans 853–872 (NEQIAGELAVAATTIKTHIR).

Belongs to the MalT family. As to quaternary structure, monomer in solution. Oligomerizes to an active state in the presence of the positive effectors ATP and maltotriose.

With respect to regulation, activated by ATP and maltotriose, which are both required for DNA binding. Positively regulates the transcription of the maltose regulon whose gene products are responsible for uptake and catabolism of malto-oligosaccharides. Specifically binds to the promoter region of its target genes, recognizing a short DNA motif called the MalT box. The protein is HTH-type transcriptional regulator MalT of Salmonella heidelberg (strain SL476).